A 323-amino-acid chain; its full sequence is Prenyl transferase (323 aa).

3 residues coordinate isopentenyl diphosphate: Lys-46, Arg-49, and His-81. Residues Asp-88 and Asp-92 each coordinate Mg(2+). Arg-97 is an an all-trans-polyprenyl diphosphate binding site. Arg-98 is an isopentenyl diphosphate binding site. Residues Lys-174, Thr-175, and Gln-212 each contribute to the an all-trans-polyprenyl diphosphate site.

The protein belongs to the FPP/GGPP synthase family. Requires Mg(2+) as cofactor.

Its function is as follows. Possible role in synthesis of the nonaprenyl side chain of plastoquinone or in synthesis of other prenyl chains such as undekaprenyl pyrophosphate. This chain is Prenyl transferase (preA), found in Synechocystis sp. (strain ATCC 27184 / PCC 6803 / Kazusa).